Reading from the N-terminus, the 465-residue chain is COP9 signalosome complex subunit 5 (465 aa).

One can recognise an MPN domain in the interval 74–216 (VLLSKLACSK…IGSFRTYQDQ (143 aa)). His162, His164, and Asp175 together coordinate Zn(2+). Positions 162–175 (HSHPGYDCWLSNID) match the JAMM motif motif. The segment at 364-386 (SSIHTQMNNQNNQQERNSPKRPH) is disordered.

This sequence belongs to the peptidase M67A family. CSN5 subfamily. Component of the COP9 signalosome (CSN) complex.

Its subcellular location is the cytoplasm. The protein localises to the nucleus. Its function is as follows. Catalytic Component of the COP9 signalosome (CSN) complex that acts as an regulator of the ubiquitin (Ubl) conjugation pathway by mediating the deneddylation of the cullin subunit of SCF-type E3 ubiquitin-protein ligase complexes. The chain is COP9 signalosome complex subunit 5 (RRI1) from Candida glabrata (strain ATCC 2001 / BCRC 20586 / JCM 3761 / NBRC 0622 / NRRL Y-65 / CBS 138) (Yeast).